The sequence spans 162 residues: 2-C-methyl-D-erythritol 2,4-cyclodiphosphate synthase (162 aa).

A divalent metal cation contacts are provided by Asp9 and His11. 4-CDP-2-C-methyl-D-erythritol 2-phosphate is bound by residues 9–11 (DVH) and 35–36 (HS). His43 provides a ligand contact to a divalent metal cation. 4-CDP-2-C-methyl-D-erythritol 2-phosphate contacts are provided by residues 57–59 (DIG), 62–66 (FPDTD), 133–136 (TTTE), Phe140, and Arg143.

Belongs to the IspF family. In terms of assembly, homotrimer. It depends on a divalent metal cation as a cofactor.

It carries out the reaction 4-CDP-2-C-methyl-D-erythritol 2-phosphate = 2-C-methyl-D-erythritol 2,4-cyclic diphosphate + CMP. It functions in the pathway isoprenoid biosynthesis; isopentenyl diphosphate biosynthesis via DXP pathway; isopentenyl diphosphate from 1-deoxy-D-xylulose 5-phosphate: step 4/6. Functionally, involved in the biosynthesis of isopentenyl diphosphate (IPP) and dimethylallyl diphosphate (DMAPP), two major building blocks of isoprenoid compounds. Catalyzes the conversion of 4-diphosphocytidyl-2-C-methyl-D-erythritol 2-phosphate (CDP-ME2P) to 2-C-methyl-D-erythritol 2,4-cyclodiphosphate (ME-CPP) with a corresponding release of cytidine 5-monophosphate (CMP). This Histophilus somni (strain 2336) (Haemophilus somnus) protein is 2-C-methyl-D-erythritol 2,4-cyclodiphosphate synthase.